The primary structure comprises 295 residues: Acetyl-coenzyme A carboxylase carboxyl transferase subunit beta (295 aa).

Residues 1 to 20 (MSWLSKLMPSGIRTENTPAK) form a disordered region. The CoA carboxyltransferase N-terminal domain maps to 28 to 295 (LWEKCSNCGS…QPHPQDADAA (268 aa)). Positions 32, 35, 51, and 54 each coordinate Zn(2+). The C4-type zinc finger occupies 32–54 (CSNCGSALYGPELEENLEVCPKC).

It belongs to the AccD/PCCB family. Acetyl-CoA carboxylase is a heterohexamer composed of biotin carboxyl carrier protein (AccB), biotin carboxylase (AccC) and two subunits each of ACCase subunit alpha (AccA) and ACCase subunit beta (AccD). It depends on Zn(2+) as a cofactor.

The protein localises to the cytoplasm. The catalysed reaction is N(6)-carboxybiotinyl-L-lysyl-[protein] + acetyl-CoA = N(6)-biotinyl-L-lysyl-[protein] + malonyl-CoA. Its pathway is lipid metabolism; malonyl-CoA biosynthesis; malonyl-CoA from acetyl-CoA: step 1/1. In terms of biological role, component of the acetyl coenzyme A carboxylase (ACC) complex. Biotin carboxylase (BC) catalyzes the carboxylation of biotin on its carrier protein (BCCP) and then the CO(2) group is transferred by the transcarboxylase to acetyl-CoA to form malonyl-CoA. In Xanthomonas euvesicatoria pv. vesicatoria (strain 85-10) (Xanthomonas campestris pv. vesicatoria), this protein is Acetyl-coenzyme A carboxylase carboxyl transferase subunit beta.